Consider the following 331-residue polypeptide: Pantothenate kinase (331 aa).

109–116 (GSVAVGKS) lines the ATP pocket.

It belongs to the prokaryotic pantothenate kinase family.

The protein resides in the cytoplasm. The enzyme catalyses (R)-pantothenate + ATP = (R)-4'-phosphopantothenate + ADP + H(+). Its pathway is cofactor biosynthesis; coenzyme A biosynthesis; CoA from (R)-pantothenate: step 1/5. The protein is Pantothenate kinase of Rhizobium rhizogenes (strain K84 / ATCC BAA-868) (Agrobacterium radiobacter).